A 318-amino-acid polypeptide reads, in one-letter code: Probable tyrosine phosphatase protein N1 (318 aa).

The Tyrosine-protein phosphatase domain maps to 26–292 (IVRLEHHQVI…LILQPGYYVL (267 aa)). Cysteine 233 (phosphocysteine intermediate) is an active-site residue.

The protein belongs to the protein-tyrosine phosphatase family.

The enzyme catalyses O-phospho-L-tyrosyl-[protein] + H2O = L-tyrosyl-[protein] + phosphate. The protein is Probable tyrosine phosphatase protein N1 (N3) of Microplitis demolitor bracovirus (isolate Webb) (MdBV).